A 182-amino-acid polypeptide reads, in one-letter code: RNA chaperone ProQ (182 aa).

The interval 125-160 is disordered; it reads EQRKEQRKDFFKKKAREERNAKTMNKAVKKGSPKKD.

Belongs to the ProQ family.

It localises to the cytoplasm. Its function is as follows. RNA chaperone with significant RNA binding, RNA strand exchange and RNA duplexing activities. This chain is RNA chaperone ProQ, found in Haemophilus ducreyi (strain 35000HP / ATCC 700724).